The primary structure comprises 713 residues: Fibroblast growth factor receptor 4 (713 aa).

The signal sequence occupies residues 1-20 (MLPLWLVLAGLLLAVGPAAS). A disordered region spans residues 21–54 (HRGEMEPDSLASGDDDEDSDGDGPHGDRSEEPVY). The Extracellular portion of the chain corresponds to 21–281 (HRGEMEPDSL…AETSEAKYTD (261 aa)). Residues 42-54 (DGPHGDRSEEPVY) show a composition bias toward basic and acidic residues. Ig-like C2-type domains lie at 59-152 (PYWT…YLLD) and 161-261 (PILQ…AWLT). A disulfide bond links C84 and C136. N133, N170, N202, N223, and N234 each carry an N-linked (GlcNAc...) asparagine glycan. A disulfide bond links C183 and C245. Residues 282 to 302 (IIIYTSGSLAVAMALIIVVLC) form a helical membrane-spanning segment. At 303-713 (RMQTQSSKQP…CLFSCPSGRT (411 aa)) the chain is on the cytoplasmic side. Residues 379–667 (LVLGKPLGEG…ILAAISEEYL (289 aa)) form the Protein kinase domain. Residues 385-393 (LGEGCFGQV) and K415 each bind ATP. The active-site Proton acceptor is the D524. Phosphotyrosine; by autocatalysis is present on residues Y554, Y555, and Y666.

It belongs to the protein kinase superfamily. Tyr protein kinase family. Fibroblast growth factor receptor subfamily. Monomer. Homodimer after ligand binding. Interacts with FGF1, FGF2, FGF4, FGF6, FGF8, FGF9, FGF16, FGF17, FGF18, FGF19, FGF21 and FGF23 (in vitro). Binding affinity for FGF family members is enhanced by interactions between FGFs and heparan sulfate proteoglycans. Interacts with KLB; this strongly increases the affinity for FGF19 and FGF23. Affinity for FGF19 is strongly increased by KLB and sulfated glycosaminoglycans. KLB and KL both interact with the core-glycosylated FGFR4 in the endoplasmic reticulum and promote its degradation, so that only FGFR4 with fully mature N-glycans is expressed at the cell surface. Identified in a complex with NCAM1, CDH2, PLCG1, FRS2, SRC, SHC1, GAP43 and CTTN. Interacts with MMP14 and HIP1. Interacts with STAT3. Post-translationally, N-glycosylated. Full maturation of the glycan chains in the Golgi is essential for high affinity interaction with FGF19. Ubiquitinated. Subject to proteasomal degradation when not fully glycosylated. In terms of processing, autophosphorylated. Binding of FGF family members together with heparan sulfate proteoglycan or heparin promotes receptor dimerization and autophosphorylation on tyrosine residues. Autophosphorylation occurs in trans between the two FGFR molecules present in the dimer.

The protein resides in the cell membrane. It is found in the endosome. The protein localises to the endoplasmic reticulum. It catalyses the reaction L-tyrosyl-[protein] + ATP = O-phospho-L-tyrosyl-[protein] + ADP + H(+). With respect to regulation, present in an inactive conformation in the absence of bound ligand. Ligand binding leads to dimerization and activation by autophosphorylation on tyrosine residues. Tyrosine-protein kinase that acts as a cell-surface receptor for fibroblast growth factors and plays a role in the regulation of cell proliferation, differentiation and migration, and in regulation of lipid metabolism, bile acid biosynthesis, glucose uptake, vitamin D metabolism and phosphate homeostasis. Required for normal down-regulation of the expression of CYP7A1, the rate-limiting enzyme in bile acid synthesis, in response to FGF19. Phosphorylates PLCG1 and FRS2. Ligand binding leads to the activation of several signaling cascades. Activation of PLCG1 leads to the production of the cellular signaling molecules diacylglycerol and inositol 1,4,5-trisphosphate. Phosphorylation of FRS2 triggers recruitment of GRB2, GAB1, PIK3R1 and SOS1, and mediates activation of RAS, MAPK1/ERK2, MAPK3/ERK1 and the MAP kinase signaling pathway, as well as of the AKT1 signaling pathway. Promotes SRC-dependent phosphorylation of the matrix protease MMP14 and its lysosomal degradation. FGFR4 signaling is down-regulated by receptor internalization and degradation; MMP14 promotes internalization and degradation of FGFR4. This Coturnix coturnix (Common quail) protein is Fibroblast growth factor receptor 4 (FGFR4).